The chain runs to 81 residues: Exodeoxyribonuclease 7 small subunit (81 aa).

The protein belongs to the XseB family. Heterooligomer composed of large and small subunits.

Its subcellular location is the cytoplasm. It catalyses the reaction Exonucleolytic cleavage in either 5'- to 3'- or 3'- to 5'-direction to yield nucleoside 5'-phosphates.. Functionally, bidirectionally degrades single-stranded DNA into large acid-insoluble oligonucleotides, which are then degraded further into small acid-soluble oligonucleotides. This is Exodeoxyribonuclease 7 small subunit from Pasteurella multocida (strain Pm70).